The chain runs to 379 residues: Tryptophan 2,3-dioxygenase (379 aa).

Substrate is bound by residues 57–61 and Arg-128; that span reads FIITH. His-312 contributes to the heme binding site. Thr-327 contributes to the substrate binding site.

It belongs to the tryptophan 2,3-dioxygenase family. Homotetramer. Dimer of dimers. Heme serves as cofactor.

The enzyme catalyses L-tryptophan + O2 = N-formyl-L-kynurenine. It participates in amino-acid degradation; L-tryptophan degradation via kynurenine pathway; L-kynurenine from L-tryptophan: step 1/2. The protein operates within pigment biosynthesis; ommochrome biosynthesis. In terms of biological role, heme-dependent dioxygenase that catalyzes the oxidative cleavage of the L-tryptophan (L-Trp) pyrrole ring and converts L-tryptophan to N-formyl-L-kynurenine. Catalyzes the oxidative cleavage of the indole moiety. The chain is Tryptophan 2,3-dioxygenase from Drosophila sechellia (Fruit fly).